The primary structure comprises 132 residues: Seminal vesicle protein SVP-2 (132 aa).

Positions 1–14 (HLALLLILENQASG) are cleaved as a signal peptide. Positions 33–81 (HKEEVEESESSRGQDFDKRRFWEKDDPTGEHVSVRHEHLEKSHIRFKED) are enriched in basic and acidic residues. 2 disordered regions span residues 33 to 104 (HKEE…LKRH) and 113 to 132 (VEDQ…MQRV). Residues 104–132 (HDAMEELVSVEDQALANGADPGKSNMQRV) constitute a propeptide that is removed on maturation.

The protein to the SVP-1/-3/-4 precursor, particularly in regions where protein processing must occur.

It localises to the secreted. The polypeptide is Seminal vesicle protein SVP-2 (Cavia porcellus (Guinea pig)).